Reading from the N-terminus, the 357-residue chain is Probable dual-specificity RNA methyltransferase RlmN (357 aa).

Catalysis depends on E92, which acts as the Proton acceptor. A Radical SAM core domain is found at H98–D336. The cysteines at positions 105 and 341 are disulfide-linked. Residues C112, C116, and C119 each contribute to the [4Fe-4S] cluster site. Residues G164 to E165, S196, S219 to H221, and N297 each bind S-adenosyl-L-methionine. C341 (S-methylcysteine intermediate) is an active-site residue.

The protein belongs to the radical SAM superfamily. RlmN family. The cofactor is [4Fe-4S] cluster.

The protein localises to the cytoplasm. The catalysed reaction is adenosine(2503) in 23S rRNA + 2 reduced [2Fe-2S]-[ferredoxin] + 2 S-adenosyl-L-methionine = 2-methyladenosine(2503) in 23S rRNA + 5'-deoxyadenosine + L-methionine + 2 oxidized [2Fe-2S]-[ferredoxin] + S-adenosyl-L-homocysteine. It carries out the reaction adenosine(37) in tRNA + 2 reduced [2Fe-2S]-[ferredoxin] + 2 S-adenosyl-L-methionine = 2-methyladenosine(37) in tRNA + 5'-deoxyadenosine + L-methionine + 2 oxidized [2Fe-2S]-[ferredoxin] + S-adenosyl-L-homocysteine. Specifically methylates position 2 of adenine 2503 in 23S rRNA and position 2 of adenine 37 in tRNAs. This is Probable dual-specificity RNA methyltransferase RlmN from Exiguobacterium sibiricum (strain DSM 17290 / CCUG 55495 / CIP 109462 / JCM 13490 / 255-15).